Here is a 716-residue protein sequence, read N- to C-terminus: Inhibitor of nuclear factor kappa-B kinase subunit epsilon (716 aa).

The region spanning 9–315 (WHTDDLLGQG…LQRVVVHVFS (307 aa)) is the Protein kinase domain. ATP is bound at residue 15 to 23 (LGQGATASV). K30 participates in a covalent cross-link: Glycyl lysine isopeptide (Lys-Gly) (interchain with G-Cter in ubiquitin). An ATP-binding site is contributed by K38. D135 (proton acceptor) is an active-site residue. The residue at position 172 (S172) is a Phosphoserine; by autocatalysis and IKKB. K231 is covalently cross-linked (Glycyl lysine isopeptide (Lys-Gly) (interchain with G-Cter in SUMO1)). Residues 383–647 (STAIPKGLAF…VQESLSKLLE (265 aa)) form an interaction with DDX3X region. K401 is covalently cross-linked (Glycyl lysine isopeptide (Lys-Gly) (interchain with G-Cter in ubiquitin)). Residues 436-457 (QELMFRGLHWVMEVLQATCRRT) are leucine-zipper. T501 carries the post-translational modification Phosphothreonine. S664 is modified (phosphoserine).

This sequence belongs to the protein kinase superfamily. Ser/Thr protein kinase family. I-kappa-B kinase subfamily. As to quaternary structure, homodimer. Interacts with MAVS/IPS1. Interacts (via protein kinase domain) with TTLL12 (via N-terminus); the interaction prevents MAVS binding to IKBKE. Interacts with the adapter proteins AZI2/NAP1, TANK and TBKBP1/SINTBAD. Interacts with SIKE1. Interacts with TICAM1/TRIF, IRF3 and RIGI; interactions are disrupted by the interaction between IKBKE and SIKE1. Interacts with TOPORS; induced by DNA damage. Interacts with CYLD. Interacts (when polyubiquitinated) with IKBKB, IKBKG and MYD88. Interacts with IFIH1. Interacts with DDX3X; the interaction may be induced upon virus infection. Interacts with TRIM6 (via SPRY box). Interacts with unanchored K48-linked polyubiquitin chains; this leads to IKBKE activation. Interacts with TBK1. Interacts with FKBP5. In terms of assembly, (Microbial infection) Interacts (via Protein kinase domain) with arenavirus protein N; the interaction inhibits IKBKE kinase function. (Microbial infection) Interacts with Ebola virus protein VP35; the interaction leads to inhibition of cellular antiviral response by blocking necessary interactions between the IKBKE and MAVS/IPS as well as its substrates IRF3 and IRF7. As to quaternary structure, (Microbial infection) Interacts with Severe fever with thrombocytopenia virus (SFTSV) NSs; this interaction this interaction sequesters IKBKE in NSs-induced cytoplasmic inclusion bodies thereby inhibiting the IFN responses. In terms of assembly, (Microbial infection) Interacts with human T-cell leukemia virus 1/HTLV-1 protein HBZ. (Microbial infection) Interacts with Epstein-Barr virus (EBV) protein NEC2/BFRF1; this interaction inhibits IKBKE kinase activity and IRF3 nuclear translocation. Post-translationally, autophosphorylated and phosphorylated by IKBKB/IKKB. Phosphorylation at Ser-172 is enhanced by the interaction with DDX3X. Phosphorylated at Thr-501 upon IFN activation. Sumoylation by TOPORS upon DNA damage is required for protection of cells against DNA damage-induced cell death. Desumoylated by SENP1. In terms of processing, 'Lys-63'-linked polyubiquitinated at Lys-30 and Lys-401 by TRAF2:BIRC2 and TRAF2:BIRC3 complexes. Ubiquitination is induced by LPS, TNFA and interleukin-1 and required for full kinase activity and KF-kappa-B pathway activation. Highly expressed in spleen followed by thymus, peripheral blood leukocytes, pancreas, placenta. Weakly expressed in lung, kidney, prostate, ovary and colon.

It localises to the cytoplasm. The protein localises to the nucleus. It is found in the PML body. It catalyses the reaction L-seryl-[I-kappa-B protein] + ATP = O-phospho-L-seryl-[I-kappa-B protein] + ADP + H(+). Functionally, serine/threonine kinase that plays an essential role in regulating inflammatory responses to viral infection, through the activation of the type I IFN, NF-kappa-B and STAT signaling. Also involved in TNFA and inflammatory cytokines, like Interleukin-1, signaling. Following activation of viral RNA sensors, such as RIG-I-like receptors, associates with DDX3X and phosphorylates interferon regulatory factors (IRFs), IRF3 and IRF7, as well as DDX3X. This activity allows subsequent homodimerization and nuclear translocation of the IRF3 leading to transcriptional activation of pro-inflammatory and antiviral genes including IFNB. In order to establish such an antiviral state, IKBKE forms several different complexes whose composition depends on the type of cell and cellular stimuli. Thus, several scaffolding molecules including IPS1/MAVS, TANK, AZI2/NAP1 or TBKBP1/SINTBAD can be recruited to the IKBKE-containing-complexes. Activated by polyubiquitination in response to TNFA and interleukin-1, regulates the NF-kappa-B signaling pathway through, at least, the phosphorylation of CYLD. Phosphorylates inhibitors of NF-kappa-B thus leading to the dissociation of the inhibitor/NF-kappa-B complex and ultimately the degradation of the inhibitor. In addition, is also required for the induction of a subset of ISGs which displays antiviral activity, may be through the phosphorylation of STAT1 at 'Ser-708'. Phosphorylation of STAT1 at 'Ser-708' also seems to promote the assembly and DNA binding of ISGF3 (STAT1:STAT2:IRF9) complexes compared to GAF (STAT1:STAT1) complexes, in this way regulating the balance between type I and type II IFN responses. Protects cells against DNA damage-induced cell death. Also plays an important role in energy balance regulation by sustaining a state of chronic, low-grade inflammation in obesity, wich leads to a negative impact on insulin sensitivity. Phosphorylates AKT1. The chain is Inhibitor of nuclear factor kappa-B kinase subunit epsilon (IKBKE) from Homo sapiens (Human).